The sequence spans 369 residues: Phospho-N-acetylmuramoyl-pentapeptide-transferase (369 aa).

Transmembrane regions (helical) follow at residues 2–22 (IAIL…TPFF), 54–74 (GLVI…FLGL), 80–100 (GLLV…DDIL), 113–133 (FYKV…TFLV), 158–178 (ALFS…LLWI), 195–215 (LDGL…VIGF), 241–261 (PLDM…FLWW), 268–288 (IMMG…LSIL), 293–313 (LLFL…ILQI), and 347–367 (FWII…ADWL).

It belongs to the glycosyltransferase 4 family. MraY subfamily. It depends on Mg(2+) as a cofactor.

It localises to the cell membrane. It carries out the reaction UDP-N-acetyl-alpha-D-muramoyl-L-alanyl-gamma-D-glutamyl-meso-2,6-diaminopimeloyl-D-alanyl-D-alanine + di-trans,octa-cis-undecaprenyl phosphate = di-trans,octa-cis-undecaprenyl diphospho-N-acetyl-alpha-D-muramoyl-L-alanyl-D-glutamyl-meso-2,6-diaminopimeloyl-D-alanyl-D-alanine + UMP. It functions in the pathway cell wall biogenesis; peptidoglycan biosynthesis. Its function is as follows. Catalyzes the initial step of the lipid cycle reactions in the biosynthesis of the cell wall peptidoglycan: transfers peptidoglycan precursor phospho-MurNAc-pentapeptide from UDP-MurNAc-pentapeptide onto the lipid carrier undecaprenyl phosphate, yielding undecaprenyl-pyrophosphoryl-MurNAc-pentapeptide, known as lipid I. The protein is Phospho-N-acetylmuramoyl-pentapeptide-transferase of Tropheryma whipplei (strain TW08/27) (Whipple's bacillus).